The chain runs to 137 residues: Large ribosomal subunit protein uL16c (137 aa).

Residues Met1–Ala21 form a disordered region.

This sequence belongs to the universal ribosomal protein uL16 family. In terms of assembly, part of the 50S ribosomal subunit.

The protein localises to the plastid. It is found in the chloroplast. The protein is Large ribosomal subunit protein uL16c of Tupiella akineta (Green alga).